The following is a 261-amino-acid chain: Cytochrome c oxidase subunit 3 (261 aa).

The Mitochondrial matrix portion of the chain corresponds to Met-1–Pro-15. A helical transmembrane segment spans residues Trp-16–Trp-34. Residues Phe-35 to Thr-40 lie on the Mitochondrial intermembrane side of the membrane. The chain crosses the membrane as a helical span at residues Thr-41–Thr-66. Residues Phe-67–Thr-72 lie on the Mitochondrial matrix side of the membrane. The helical transmembrane segment at Pro-73–Ser-105 threads the bilayer. Topologically, residues Leu-106–Glu-128 are mitochondrial intermembrane. The helical transmembrane segment at Val-129–Met-152 threads the bilayer. Over Glu-153–Asn-155 the chain is Mitochondrial matrix. Residues Arg-156–Glu-183 traverse the membrane as a helical segment. Topologically, residues Ala-184 to Asp-190 are mitochondrial intermembrane. The helical transmembrane segment at Gly-191–Leu-223 threads the bilayer. Residues Lys-224–His-232 are Mitochondrial matrix-facing. Residues Phe-233 to Ile-256 traverse the membrane as a helical segment. The Mitochondrial intermembrane segment spans residues Tyr-257–Ser-261.

The protein belongs to the cytochrome c oxidase subunit 3 family. As to quaternary structure, component of the cytochrome c oxidase (complex IV, CIV), a multisubunit enzyme composed of 14 subunits. The complex is composed of a catalytic core of 3 subunits MT-CO1, MT-CO2 and MT-CO3, encoded in the mitochondrial DNA, and 11 supernumerary subunits COX4I, COX5A, COX5B, COX6A, COX6B, COX6C, COX7A, COX7B, COX7C, COX8 and NDUFA4, which are encoded in the nuclear genome. The complex exists as a monomer or a dimer and forms supercomplexes (SCs) in the inner mitochondrial membrane with NADH-ubiquinone oxidoreductase (complex I, CI) and ubiquinol-cytochrome c oxidoreductase (cytochrome b-c1 complex, complex III, CIII), resulting in different assemblies (supercomplex SCI(1)III(2)IV(1) and megacomplex MCI(2)III(2)IV(2)).

The protein resides in the mitochondrion inner membrane. It carries out the reaction 4 Fe(II)-[cytochrome c] + O2 + 8 H(+)(in) = 4 Fe(III)-[cytochrome c] + 2 H2O + 4 H(+)(out). In terms of biological role, component of the cytochrome c oxidase, the last enzyme in the mitochondrial electron transport chain which drives oxidative phosphorylation. The respiratory chain contains 3 multisubunit complexes succinate dehydrogenase (complex II, CII), ubiquinol-cytochrome c oxidoreductase (cytochrome b-c1 complex, complex III, CIII) and cytochrome c oxidase (complex IV, CIV), that cooperate to transfer electrons derived from NADH and succinate to molecular oxygen, creating an electrochemical gradient over the inner membrane that drives transmembrane transport and the ATP synthase. Cytochrome c oxidase is the component of the respiratory chain that catalyzes the reduction of oxygen to water. Electrons originating from reduced cytochrome c in the intermembrane space (IMS) are transferred via the dinuclear copper A center (CU(A)) of subunit 2 and heme A of subunit 1 to the active site in subunit 1, a binuclear center (BNC) formed by heme A3 and copper B (CU(B)). The BNC reduces molecular oxygen to 2 water molecules using 4 electrons from cytochrome c in the IMS and 4 protons from the mitochondrial matrix. The polypeptide is Cytochrome c oxidase subunit 3 (MT-CO3) (Litocranius walleri (Gerenuk)).